Reading from the N-terminus, the 165-residue chain is Large ribosomal subunit protein uL11 (165 aa).

Belongs to the universal ribosomal protein uL11 family.

In terms of biological role, binds directly to 26S ribosomal RNA. This chain is Large ribosomal subunit protein uL11 (rpl-12), found in Caenorhabditis briggsae.